Reading from the N-terminus, the 172-residue chain is dCTP deaminase (172 aa).

DCTP-binding positions include Arg-97 to Arg-102 and Asp-113. Glu-123 (proton donor/acceptor) is an active-site residue. Residues Tyr-155 and Gln-162 each coordinate dCTP.

Belongs to the dCTP deaminase family. Homotrimer.

The catalysed reaction is dCTP + H2O + H(+) = dUTP + NH4(+). It functions in the pathway pyrimidine metabolism; dUMP biosynthesis; dUMP from dCTP (dUTP route): step 1/2. Functionally, catalyzes the deamination of dCTP to dUTP. The sequence is that of dCTP deaminase from Metallosphaera sedula (strain ATCC 51363 / DSM 5348 / JCM 9185 / NBRC 15509 / TH2).